Reading from the N-terminus, the 843-residue chain is Vacuolar membrane protease (843 aa).

Over 1–16 (MTNSRRHIFERICAKA) the chain is Cytoplasmic. A helical membrane pass occupies residues 17-37 (FQSSLTCSIFGFTVLLILYLL). The Vacuolar portion of the chain corresponds to 38–347 (DWKRIAQVPG…LAFGKYWQLN (310 aa)). N-linked (GlcNAc...) asparagine glycosylation is found at Asn96, Asn109, and Asn117. The Zn(2+) site is built by His147 and Asp159. The Proton acceptor role is filled by Glu191. Glu192 serves as a coordination point for Zn(2+). Asn209 carries an N-linked (GlcNAc...) asparagine glycan. A Zn(2+)-binding site is contributed by Glu217. An N-linked (GlcNAc...) asparagine glycan is attached at Asn275. His292 is a Zn(2+) binding site. Asn322 is a glycosylation site (N-linked (GlcNAc...) asparagine). The helical transmembrane segment at 348–368 (LPIYQVLNIIFAVICPIVLLL) threads the bilayer. At 369–386 (TLIRFPSLYEQLKKPRYT) the chain is on the cytoplasmic side. Residues 387–407 (VCFVVSCIFVSIFDTLTVLLL) form a helical membrane-spanning segment. Residues 408–417 (TWINPYVINS) lie on the Vacuolar side of the membrane. Residues 418 to 438 (HTGLILALFYLTNLIALAFSF) form a helical membrane-spanning segment. Residues 439–456 (RAAATHSKLSSEDLSSIE) are Cytoplasmic-facing. A helical transmembrane segment spans residues 457–477 (IVFIWYAQILWYLVFIVSVIL). Topologically, residues 478-484 (SIYFQLG) are vacuolar. The helical transmembrane segment at 485-505 (STYWVTLSYLCTFTCCIMTII) threads the bilayer. The Cytoplasmic portion of the chain corresponds to 506–566 (RINYFVDNVV…NRAHVKLIDN (61 aa)). The helical transmembrane segment at 567–587 (IWTVIYFIFNVPFPVFLCYDI) threads the bilayer. The Vacuolar portion of the chain corresponds to 588-608 (LVETILPAGSQTLTDSVFSSK). The chain crosses the membrane as a helical span at residues 609–629 (LYKLVIFVVFLSLVNSGPFIF). Over 630-636 (RALSKKS) the chain is Cytoplasmic. Residues 637–657 (LAVLTMLWITLFVQALSVNPF) traverse the membrane as a helical segment. Residues 658 to 843 (TESAPLKLSF…LLKVKSSIVI (186 aa)) are Vacuolar-facing. Residues Asn677, Asn703, Asn707, Asn754, and Asn788 are each glycosylated (N-linked (GlcNAc...) asparagine).

The protein belongs to the peptidase M28 family. Zn(2+) serves as cofactor.

It is found in the membrane. It localises to the vacuole membrane. Its function is as follows. May be involved in vacuolar sorting and osmoregulation. The protein is Vacuolar membrane protease of Schizosaccharomyces pombe (strain 972 / ATCC 24843) (Fission yeast).